The chain runs to 920 residues: Disintegrin and metalloproteinase domain-containing protein 19 (920 aa).

Positions Met-1–Cys-26 are cleaved as a signal peptide. A propeptide spanning residues Glu-27–Arg-204 is cleaved from the precursor. Over Glu-27–Ser-703 the chain is Extracellular. Residues Ser-131–Gly-138 carry the Cysteine switch motif. Cys-133 is a binding site for Zn(2+). N-linked (GlcNAc...) asparagine glycosylation is present at Asn-145. One can recognise a Peptidase M12B domain in the interval Lys-211–Pro-409. 3 disulfide bridges follow: Cys-321–Cys-404, Cys-361–Cys-388, and Cys-362–Cys-371. His-346 contacts Zn(2+). Glu-347 is an active-site residue. His-350 and His-356 together coordinate Zn(2+). A Disintegrin domain is found at Gly-417–Asp-503. 2 N-linked (GlcNAc...) asparagine glycosylation sites follow: Asn-445 and Asn-448. A disulfide bridge connects residues Cys-475 and Cys-495. N-linked (GlcNAc...) asparagine glycosylation occurs at Asn-649. The region spanning Glu-654–Asn-686 is the EGF-like domain. 3 disulfide bridges follow: Cys-658–Cys-668, Cys-662–Cys-674, and Cys-676–Cys-685. Residues Val-704–Leu-724 traverse the membrane as a helical segment. Residues Cys-725 to Ile-920 lie on the Cytoplasmic side of the membrane. The interval Ser-755–Ile-920 is disordered. Polar residues predominate over residues Phe-767 to Glu-783. Basic and acidic residues predominate over residues Ala-825–Arg-834. The short motif at Arg-835–Pro-846 is the SH3-binding element. Pro residues-rich tracts occupy residues Arg-835 to Pro-846 and Thr-888 to Lys-903.

In terms of assembly, interacts with SH3PXD2A. Requires Zn(2+) as cofactor. In terms of processing, the precursor is cleaved by a furin endopeptidase. As to expression, widely expressed, with the highest expression in bone, heart and lung, followed by brain and spleen and relatively low expression in liver, skeletal muscle, kidney and testis. In bone, primarily expressed in cell of the osteoblast lineage and not detected in mature osteoclasts.

It is found in the membrane. Functionally, participates in the proteolytic processing of beta-type neuregulin isoforms which are involved in neurogenesis and synaptogenesis, suggesting a regulatory role in glial cell. Also cleaves alpha-2 macroglobulin. May be involved in osteoblast differentiation and/or osteoblast activity in bone. The protein is Disintegrin and metalloproteinase domain-containing protein 19 (Adam19) of Mus musculus (Mouse).